Reading from the N-terminus, the 305-residue chain is Ornithine carbamoyltransferase (305 aa).

Residues 52 to 55 (STRT), Gln79, Arg103, and 130 to 133 (HPLQ) each bind carbamoyl phosphate. L-ornithine is bound by residues Asn162, Asp224, and 228 to 229 (SM). Carbamoyl phosphate contacts are provided by residues 264-265 (CL) and Arg292.

Belongs to the aspartate/ornithine carbamoyltransferase superfamily. OTCase family.

The protein localises to the cytoplasm. The enzyme catalyses carbamoyl phosphate + L-ornithine = L-citrulline + phosphate + H(+). It participates in amino-acid biosynthesis; L-arginine biosynthesis; L-arginine from L-ornithine and carbamoyl phosphate: step 1/3. Functionally, reversibly catalyzes the transfer of the carbamoyl group from carbamoyl phosphate (CP) to the N(epsilon) atom of ornithine (ORN) to produce L-citrulline. This Pyrobaculum islandicum (strain DSM 4184 / JCM 9189 / GEO3) protein is Ornithine carbamoyltransferase.